The sequence spans 79 residues: Large ribosomal subunit protein uL29 (79 aa).

It belongs to the universal ribosomal protein uL29 family.

In Tropheryma whipplei (strain Twist) (Whipple's bacillus), this protein is Large ribosomal subunit protein uL29.